The sequence spans 214 residues: U3 small nucleolar RNA-associated protein 16 (214 aa).

A compositionally biased stretch (basic and acidic residues) spans 1-10 (MSNGHVKFDA). Residues 1 to 106 (MSNGHVKFDA…KSVNETEVTD (106 aa)) are disordered. Ser16 carries the phosphoserine modification. Residues 22–41 (DRQDDVLVISKKDKEVHSSS) are compositionally biased toward basic and acidic residues. The span at 42–52 (DEESDDDDAPQ) shows a compositional bias: acidic residues. Residues Ser45, Ser65, and Ser144 each carry the phosphoserine modification. The segment covering 54-75 (EGLHSGKSEVESQITQREEAIR) has biased composition (basic and acidic residues). Residues 182 to 214 (STTQDSKTLPPKKESSIIRSKDRWLNRKALNKG) are disordered. A compositionally biased stretch (basic and acidic residues) spans 192–206 (PKKESSIIRSKDRWL).

Belongs to the UTP16 family. Part of the small subunit (SSU) processome composed of at least 40 protein subunits and the RNA chaperone small nucleolar RNA (snoRNA) U3. Interacts with snoRNA U3. Interacts with MPP10.

It localises to the nucleus. Its subcellular location is the nucleolus. Functions as part of the small subunit (SSU) processome, first precursor of the small eukaryotic ribosomal subunit that coordinates the first two steps of ribosome biogenesis in transcription of the primary transcript pre-RNA and pre-18S processing. During the assembly of the SSU processome in the nucleolus, many ribosome biogenesis factors, an RNA chaperone and ribosomal proteins associate with the nascent pre-rRNA and work in concert to generate RNA folding, modifications, rearrangements and cleavage as well as targeted degradation of pre-ribosomal RNA by the RNA exosome. Has a role in bud site selection maybe via the regulation of expression of bipolar budding components. This chain is U3 small nucleolar RNA-associated protein 16 (BUD21), found in Saccharomyces cerevisiae (strain ATCC 204508 / S288c) (Baker's yeast).